The primary structure comprises 468 residues: 6-phosphogluconate dehydrogenase, decarboxylating (468 aa).

NADP(+) contacts are provided by residues 9–14 (GLAVMG), 32–34 (NRS), 73–75 (VQA), and Asn101. Substrate is bound by residues Asn101 and 127–129 (SGG). Lys182 acts as the Proton acceptor in catalysis. Position 185–186 (185–186 (HN)) interacts with substrate. The active-site Proton donor is the Glu189. Substrate is bound by residues Tyr190, Lys259, Arg286, Arg444, and His450.

It belongs to the 6-phosphogluconate dehydrogenase family. As to quaternary structure, homodimer.

The enzyme catalyses 6-phospho-D-gluconate + NADP(+) = D-ribulose 5-phosphate + CO2 + NADPH. Its pathway is carbohydrate degradation; pentose phosphate pathway; D-ribulose 5-phosphate from D-glucose 6-phosphate (oxidative stage): step 3/3. In terms of biological role, catalyzes the oxidative decarboxylation of 6-phosphogluconate to ribulose 5-phosphate and CO(2), with concomitant reduction of NADP to NADPH. This Staphylococcus aureus (strain Mu50 / ATCC 700699) protein is 6-phosphogluconate dehydrogenase, decarboxylating (gnd).